The sequence spans 264 residues: Na(+)-translocating NADH-quinone reductase subunit E (264 aa).

The next 6 membrane-spanning stretches (helical) occupy residues 11-31 (VFGI…NFLG), 50-70 (MSVA…HTFI), 90-110 (FLEL…LELL), 123-143 (GIFL…LFGI), 149-169 (FIPM…AIVL), and 189-209 (MGIS…LTGI).

Belongs to the NqrDE/RnfAE family. In terms of assembly, composed of six subunits; NqrA, NqrB, NqrC, NqrD, NqrE and NqrF.

The protein resides in the cell inner membrane. The enzyme catalyses a ubiquinone + n Na(+)(in) + NADH + H(+) = a ubiquinol + n Na(+)(out) + NAD(+). In terms of biological role, NQR complex catalyzes the reduction of ubiquinone-1 to ubiquinol by two successive reactions, coupled with the transport of Na(+) ions from the cytoplasm to the periplasm. NqrA to NqrE are probably involved in the second step, the conversion of ubisemiquinone to ubiquinol. The polypeptide is Na(+)-translocating NADH-quinone reductase subunit E (Chlamydia caviae (strain ATCC VR-813 / DSM 19441 / 03DC25 / GPIC) (Chlamydophila caviae)).